Here is a 291-residue protein sequence, read N- to C-terminus: Putative transport permease ycf38 (291 aa).

The next 6 membrane-spanning stretches (helical) occupy residues 47 to 67 (ATLM…GGLF), 87 to 107 (SGII…PLMF), 135 to 155 (FMTC…LFMG), 165 to 185 (LIFA…SLAL), 195 to 215 (LLAL…ALAP), and 262 to 282 (ISLG…AYIV). The region spanning 47-289 (ATLMAGIIQP…YIVSNILKAR (243 aa)) is the ABC transmembrane type-2 domain.

The protein belongs to the ABC-2 integral membrane protein family.

The protein resides in the plastid. Its subcellular location is the chloroplast membrane. This is Putative transport permease ycf38 (ycf38) from Porphyra purpurea (Red seaweed).